Reading from the N-terminus, the 530-residue chain is GMP synthase [glutamine-hydrolyzing] (530 aa).

One can recognise a Glutamine amidotransferase type-1 domain in the interval 4–205 (RILILDYGSQ…VKDICGCEGD (202 aa)). Cysteine 84 serves as the catalytic Nucleophile. Active-site residues include histidine 179 and glutamate 181. The GMPS ATP-PPase domain maps to 206 to 398 (WNMPDYISEA…LGLPPQMVYR (193 aa)). Residue 233–239 (SGGVDSL) coordinates ATP.

In terms of assembly, homodimer.

The enzyme catalyses XMP + L-glutamine + ATP + H2O = GMP + L-glutamate + AMP + diphosphate + 2 H(+). Its pathway is purine metabolism; GMP biosynthesis; GMP from XMP (L-Gln route): step 1/1. Functionally, catalyzes the synthesis of GMP from XMP. The chain is GMP synthase [glutamine-hydrolyzing] from Bordetella parapertussis (strain 12822 / ATCC BAA-587 / NCTC 13253).